The chain runs to 370 residues: Immunoglobulin superfamily member 5 (370 aa).

Positions Met1–Ser24 are cleaved as a signal peptide. Ig-like V-type domains lie at Tyr25–Gln125 and Gly128–Thr215. Topologically, residues Tyr25–Ala239 are extracellular. Asn33 and Asn45 each carry an N-linked (GlcNAc...) asparagine glycan. A disulfide bridge connects residues Cys46 and Cys109. 3 N-linked (GlcNAc...) asparagine glycosylation sites follow: Asn146, Asn196, and Asn217. Cys149 and Cys201 are oxidised to a cystine. A helical membrane pass occupies residues Ile240–Ile260. Over Phe261–Val370 the chain is Cytoplasmic. Positions Ala284–Ala359 are disordered. Residues Asn289–Lys301 are compositionally biased toward basic and acidic residues.

The protein belongs to the immunoglobulin superfamily. As to quaternary structure, interacts with MAGI1 at tight junctions, forms a tripartite complex with NPHS1. Interacts with LNX1 isoform 2 via its PDZ 2 domain, it may also interact with other isoforms containing this domain. In terms of processing, N-glycosylated. Localized to kidney glomeruli and small intestinal epithelial cells. In kidney glomeruli, it is localized at slit diaphragm. Also found in spermatogonia, gonocytes, hematopoietic stem cells and Sertoli cells.

It is found in the apical cell membrane. It localises to the cell junction. The protein resides in the tight junction. Functionally, provides, together with MAGI1, an adhesion machinery at tight junctions, which may regulate the permeability of kidney glomerulus and small intestinal epithelial cells. Mediates calcium-independent homophilic cell adhesion. In testis, it may function as a cell adhesion molecule rather than a tight-junction protein. It may participate in the adhesion between spermatogonia-spermatogonia, spermatogonia-Sertoli cells, and Sertoli cells-Sertoli cells. The sequence is that of Immunoglobulin superfamily member 5 (Igsf5) from Mus musculus (Mouse).